The following is a 121-amino-acid chain: CRISPR system Cms protein Csm2 (121 aa).

The protein belongs to the CRISPR-associated Csm2 family. In terms of assembly, part of the Csm effector complex that includes at least Cas10(1), Csm2(3), Csm3(5), Csm4(1), Csm5(1) and mature crRNA. The Csm complex is elongated and slightly twisted with a maximal length of 215 Angstroms and a diameter of 75-80 Angstroms. It has been modeled to have a central protein filamant of Csm3 subunits along which the dsRNA helix of paired crRNA and target RNA binds. The filament is capped at one end by Cas10 and Csm4 and at the other end by Csm5; ssDNA is thought to bind to the N-terminal HD domain of Cas10. Csm with a precursor crRNA does not include Csm5, while Cas6, the enzyme probably involved in pre-crRNA processing, is found associated with a subset of the Csm complex.

CRISPR (clustered regularly interspaced short palindromic repeat) is an adaptive immune system that provides protection against mobile genetic elements (viruses, transposable elements and conjugative plasmids). CRISPR clusters contain spacers, sequences complementary to antecedent mobile elements, and target invading nucleic acids. CRISPR clusters are transcribed and processed into CRISPR RNA (crRNA). The type III-A Csm effector complex binds crRNA and acts as a crRNA-guided RNase, DNase and cyclic oligoadenylate synthase; binding of target RNA cognate to the crRNA is required for all activities. In a heterologous host this Csm effector complex restricts ssRNA phage MS2, suggesting it may target RNA viruses in vivo. In terms of biological role, csm functions as a non-specific ssDNase. Base-pairing between crRNA and target RNA to form a ternary Csm complex activates a ssDNase activity; target RNA cleavage suppresses the ssDNase, a temporal control that prevents uncontrolled DNA degradation. Viral RNA transcripts probably tether the Csm complex to the viral genome, recruiting Cas10 ssDNA activity which is able to degrade DNA in the transcription bubble, spatially controlling the DNase activity. Functionally, this subunit may be involved in monitoring complementarity of crRNA and target RNA. The polypeptide is CRISPR system Cms protein Csm2 (Streptococcus thermophilus).